Here is a 248-residue protein sequence, read N- to C-terminus: UPF0246 protein A1G_03985 (248 aa).

This sequence belongs to the UPF0246 family.

In Rickettsia rickettsii (strain Sheila Smith), this protein is UPF0246 protein A1G_03985.